The chain runs to 526 residues: Glutamyl-tRNA(Gln) amidotransferase subunit A, mitochondrial (526 aa).

K76 acts as the Charge relay system in catalysis. The interval 147-166 is disordered; sequence QYREKRKQNSHSENEDSNWL. S171 (charge relay system) is an active-site residue. The active-site Acyl-ester intermediate is the S195.

It belongs to the amidase family. GatA subfamily. As to quaternary structure, subunit of the heterotrimeric GatCAB amidotransferase (AdT) complex, composed of A (QRSL1), B (GATB) and C (GATC) subunits.

The protein resides in the mitochondrion. The enzyme catalyses L-glutamyl-tRNA(Gln) + L-glutamine + ATP + H2O = L-glutaminyl-tRNA(Gln) + L-glutamate + ADP + phosphate + H(+). Functionally, allows the formation of correctly charged Gln-tRNA(Gln) through the transamidation of misacylated Glu-tRNA(Gln) in the mitochondria. The reaction takes place in the presence of glutamine and ATP through an activated gamma-phospho-Glu-tRNA(Gln). The sequence is that of Glutamyl-tRNA(Gln) amidotransferase subunit A, mitochondrial from Bos taurus (Bovine).